Here is a 96-residue protein sequence, read N- to C-terminus: uncharacterized protein (96 aa).

A signal peptide spans 1 to 15 (MRLFILLVALFVICA).

This is an uncharacterized protein from Caenorhabditis elegans.